The chain runs to 268 residues: 1D-myo-inositol 2-acetamido-2-deoxy-alpha-D-glucopyranoside deacetylase (268 aa).

Zn(2+) contacts are provided by histidine 7, aspartate 10, and histidine 142.

The protein belongs to the MshB deacetylase family. Zn(2+) serves as cofactor.

The enzyme catalyses 1D-myo-inositol 2-acetamido-2-deoxy-alpha-D-glucopyranoside + H2O = 1D-myo-inositol 2-amino-2-deoxy-alpha-D-glucopyranoside + acetate. In terms of biological role, catalyzes the deacetylation of 1D-myo-inositol 2-acetamido-2-deoxy-alpha-D-glucopyranoside (GlcNAc-Ins) in the mycothiol biosynthesis pathway. In Saccharomonospora viridis (strain ATCC 15386 / DSM 43017 / JCM 3036 / CCUG 5913 / NBRC 12207 / NCIMB 9602 / P101) (Thermoactinomyces viridis), this protein is 1D-myo-inositol 2-acetamido-2-deoxy-alpha-D-glucopyranoside deacetylase.